A 223-amino-acid polypeptide reads, in one-letter code: Exosome complex component RRP46 (223 aa).

This sequence belongs to the RNase PH family. In terms of assembly, component of the RNA exosome complex. Specifically part of the catalytically inactive RNA exosome core complex (Exo-9) which may associate with the catalytic subunits RRP6 and DIS3 in cytoplasmic- and nuclear-specific RNA exosome complex forms. Exo-9 is formed by a hexameric base ring of RNase PH domain-containing subunits and a cap ring consisting of CSL4, RRP4 and RRP40.

It localises to the cytoplasm. Its subcellular location is the nucleus. The protein localises to the nucleolus. Functionally, non-catalytic component of the RNA exosome complex which has 3'-&gt;5' exoribonuclease activity and participates in a multitude of cellular RNA processing and degradation events. In the nucleus, the RNA exosome complex is involved in proper maturation of stable RNA species such as rRNA, snRNA and snoRNA, in the elimination of RNA processing by-products and non-coding 'pervasive' transcripts, such as antisense RNA species and cryptic unstable transcripts (CUTs), and of mRNAs with processing defects, thereby limiting or excluding their export to the cytoplasm. In the cytoplasm, the RNA exosome complex is involved in general mRNA turnover and in RNA surveillance pathways, preventing translation of aberrant mRNAs. The catalytic inactive RNA exosome core complex of 9 subunits (Exo-9) is proposed to play a pivotal role in the binding and presentation of RNA for ribonucleolysis, and to serve as a scaffold for the association with catalytic subunits and accessory proteins or complexes. RRP46 is part of the hexameric ring of RNase PH domain-containing subunits proposed to form a central channel which threads RNA substrates for degradation. This Saccharomyces cerevisiae (strain ATCC 204508 / S288c) (Baker's yeast) protein is Exosome complex component RRP46 (RRP46).